Consider the following 184-residue polypeptide: F(420)H(2) dehydrogenase subunit B (184 aa).

The tract at residues 1–20 (MGEVKETKTNNSKENPEEEV) is disordered. [4Fe-4S] cluster-binding residues include Cys61, Cys62, Cys126, and Cys156.

Belongs to the complex I 20 kDa subunit family. The FPO complex is composed of at least 13 different subunits. Requires FAD as cofactor. [4Fe-4S] cluster is required as a cofactor.

Its subcellular location is the cell inner membrane. It carries out the reaction methanophenazine + reduced coenzyme F420-(gamma-L-Glu)(n) = dihydromethanophenazine + oxidized coenzyme F420-(gamma-L-Glu)(n) + H(+). Its function is as follows. Component of the F(420)H(2) dehydrogenase (FPO complex) which is part of the energy-conserving F(420)H(2):heterodisulfide oxidoreductase system. The membrane-bound electron transfer system of the complex plays an important role in the metabolism of methylotrophic methanogens when the organisms grow on methanol or methylamines. Catalyzes the oxidation of methanophenazine to dihydromethanophenazine. It shuttles electrons from F(420)H(2), via FAD and iron-sulfur (Fe-S) centers, to methanophenazine (an electron carrier in the membrane). It couples the redox reaction to proton translocation (for every two electrons transferred, two hydrogen ions are translocated across the cytoplasmic membrane), and thus conserves the redox energy in a proton gradient. It also catalyzes the oxidation of F(420)H(2) with quinones such as 2,3-dimethyl-1,4-naphthoquinone, 2-methyl-1,4-naphthoquinone and tetramethyl-p-benzoquinone. The chain is F(420)H(2) dehydrogenase subunit B (fpoB) from Methanosarcina mazei (strain ATCC BAA-159 / DSM 3647 / Goe1 / Go1 / JCM 11833 / OCM 88) (Methanosarcina frisia).